The chain runs to 274 residues: Cytochrome b-c1 complex subunit Rieske, mitochondrial (274 aa).

Over 79–103 the chain is Mitochondrial matrix; that stretch reads SHTDVRVPDFSEYRRLEVLDSTKSS. Residues 104–140 traverse the membrane as a helical segment; sequence RESSEARKGFSYLVTGVTTVGVAYAAKNVVTQFVSSM. At 141–274 the chain is on the mitochondrial intermembrane side; that stretch reads SASADVLALA…FTSDDMVIVG (134 aa). The 86-residue stretch at 187 to 272 folds into the Rieske domain; the sequence is EAAVELSQLR…YEFTSDDMVI (86 aa). [2Fe-2S] cluster contacts are provided by cysteine 217, histidine 219, cysteine 236, histidine 239, and serine 241. An intrachain disulfide couples cysteine 222 to cysteine 238.

This sequence belongs to the Rieske iron-sulfur protein family. As to quaternary structure, component of the ubiquinol-cytochrome c oxidoreductase (cytochrome b-c1 complex, complex III, CIII), a multisubunit enzyme composed of 11 subunits. The complex is composed of 3 respiratory subunits cytochrome b, cytochrome c1 and Rieske protein UQCRFS1, 2 core protein subunits UQCRC1/QCR1 and UQCRC2/QCR2, and 6 low-molecular weight protein subunits UQCRH/QCR6, UQCRB/QCR7, UQCRQ/QCR8, UQCR10/QCR9, UQCR11/QCR10 and subunit 9, the cleavage product of Rieske protein UQCRFS1. The complex exists as an obligatory dimer and forms supercomplexes (SCs) in the inner mitochondrial membrane with NADH-ubiquinone oxidoreductase (complex I, CI) and cytochrome c oxidase (complex IV, CIV), resulting in different assemblies (supercomplex SCI(1)III(2)IV(1) and megacomplex MCI(2)III(2)IV(2)). Incorporation of the Rieske protein UQCRFS1 is the penultimate step in complex III assembly. Interacts with TTC19, which is involved in the clearance of UQCRFS1 fragments. Component of the ubiquinol-cytochrome c oxidoreductase (cytochrome b-c1 complex, complex III, CIII). Subunit 9 corresponds to the mitochondrial targeting sequence (MTS) of Rieske protein UQCRFS1. It is retained after processing and incorporated inside complex III, where it remains bound to the complex and localizes between the 2 core subunits UQCRC1/QCR1 and UQCRC2/QCR2. It depends on [2Fe-2S] cluster as a cofactor. In terms of processing, proteolytic processing is necessary for the correct insertion of UQCRFS1 in the complex III dimer. Several fragments are generated during UQCRFS1 insertion, most probably due to the endogenous matrix-processing peptidase (MPP) activity of the 2 core protein subunits UQCRC1/QCR1 and UQCRC2/QCR2, which are homologous to the 2 mitochondrial-processing peptidase (MPP) subunits beta-MPP and alpha-MPP respectively. The action of the protease is also necessary for the clearance of the UQCRFS1 fragments.

The protein resides in the mitochondrion inner membrane. It catalyses the reaction a quinol + 2 Fe(III)-[cytochrome c](out) = a quinone + 2 Fe(II)-[cytochrome c](out) + 2 H(+)(out). In terms of biological role, component of the ubiquinol-cytochrome c oxidoreductase, a multisubunit transmembrane complex that is part of the mitochondrial electron transport chain which drives oxidative phosphorylation. The respiratory chain contains 3 multisubunit complexes succinate dehydrogenase (complex II, CII), ubiquinol-cytochrome c oxidoreductase (cytochrome b-c1 complex, complex III, CIII) and cytochrome c oxidase (complex IV, CIV), that cooperate to transfer electrons derived from NADH and succinate to molecular oxygen, creating an electrochemical gradient over the inner membrane that drives transmembrane transport and the ATP synthase. The cytochrome b-c1 complex catalyzes electron transfer from ubiquinol to cytochrome c, linking this redox reaction to translocation of protons across the mitochondrial inner membrane, with protons being carried across the membrane as hydrogens on the quinol. In the process called Q cycle, 2 protons are consumed from the matrix, 4 protons are released into the intermembrane space and 2 electrons are passed to cytochrome c. The Rieske protein is a catalytic core subunit containing a [2Fe-2S] iron-sulfur cluster. It cycles between 2 conformational states during catalysis to transfer electrons from the quinol bound in the Q(0) site in cytochrome b to cytochrome c1. Incorporation of UQCRFS1 is the penultimate step in complex III assembly. Functionally, component of the ubiquinol-cytochrome c oxidoreductase (cytochrome b-c1 complex, complex III, CIII). UQCRFS1 undergoes proteolytic processing once it is incorporated in the complex III dimer. One of the fragments, called subunit 9, corresponds to its mitochondrial targeting sequence (MTS). The proteolytic processing is necessary for the correct insertion of UQCRFS1 in the complex III dimer, but the persistence of UQCRFS1-derived fragments may prevent newly imported UQCRFS1 to be processed and assembled into complex III and is detrimental for the complex III structure and function. In Pongo pygmaeus (Bornean orangutan), this protein is Cytochrome b-c1 complex subunit Rieske, mitochondrial (UQCRFS1).